A 493-amino-acid chain; its full sequence is Reticulophagy regulator 1 (493 aa).

Residues 1–52 form a disordered region; it reads MASPAPPEPAEQGSPALAAAPQAPPPPTRAPPEEPEGAAPPEEGAAAGAGRQ. Residues 1–55 are Cytoplasmic-facing; the sequence is MASPAPPEPAEQGSPALAAAPQAPPPPTRAPPEEPEGAAPPEEGAAAGAGRQVEE. Over residues 37-52 the composition is skewed to low complexity; it reads GAAPPEEGAAAGAGRQ. Residues 56–76 form a helical membrane-spanning segment; the sequence is AAGGVAAVVTWLLGEPALWLG. Residues 77-87 lie on the Lumenal side of the membrane; that stretch reads GRADELLSWKR. Residues 80–229 form a reticulon homology domain region; that stretch reads DELLSWKRPL…LLCAFLCPLF (150 aa). A helical membrane pass occupies residues 88–108; it reads PLHSLLAFVGANLVFWFLALT. The Cytoplasmic portion of the chain corresponds to 109-114; sequence PWRVYH. The chain crosses the membrane as a helical span at residues 115 to 135; the sequence is LISVMILTRVIMQIIKDMILS. At 136–204 the chain is on the lumenal side; that stretch reads RTRGAQLWRS…LVCSVCTFFT (69 aa). Phosphoserine is present on Ser-145. The residue at position 147 (Ser-147) is a Phosphoserine; by CAMK2B. The residue at position 149 (Ser-149) is a Phosphoserine. The helical transmembrane segment at 205 to 225 threads the bilayer; sequence ILGSYIPGVILSYLLLLCAFL. Residues 226–493 lie on the Cytoplasmic side of the membrane; the sequence is CPLFKCNDIG…GFLSNLLGGH (268 aa). Over residues 315 to 326 the composition is skewed to polar residues; sequence FNLSEGYTPQTD. 2 disordered regions span residues 315–394 and 435–493; these read FNLS…GLSL and AAPS…LGGH. Positions 330-344 are enriched in basic and acidic residues; that stretch reads DLDRPSEEVFSRDLS. Thr-353 is modified (phosphothreonine). The span at 368–388 shows a compositional bias: basic and acidic residues; the sequence is ELKRKKEQLDGGPRRSTEKKS. A compositionally biased stretch (acidic residues) spans 441-463; that stretch reads EDTDTEEGDDFELLDQSELDQIE. An LIR motif motif is present at residues 449 to 454; that stretch reads DDFELL. Residues 467–486 are compositionally biased toward polar residues; that stretch reads GLSQDQEAEAQQNKKSSGFL.

This sequence belongs to the RETREG family. Homooligomer; oligomerization is enhanced following endoplasmic reticulum stress and is mediated by the reticulon homology domain. Interacts with ATG8 family modifier proteins MAP1LC3A, MAP1LC3B, GABARAP, GABARAPL1 and GABARAPL2. Post-translationally, phosphorylation at Ser-147 by CAMK2B enhances oligomerization and membrane scission and reticulophagy activity.

Its subcellular location is the golgi apparatus. It is found in the cis-Golgi network membrane. The protein localises to the endoplasmic reticulum membrane. Endoplasmic reticulum (ER)-anchored autophagy regulator which mediates ER delivery into lysosomes through sequestration into autophagosomes. Promotes membrane remodeling and ER scission via its membrane bending capacity and targets the fragments into autophagosomes via interaction with ATG8 family proteins. Active under basal conditions. Required for collagen quality control in a LIR motif-dependent manner. Required for long-term survival of nociceptive and autonomic ganglion neurons. This chain is Reticulophagy regulator 1 (RETREG1), found in Bos taurus (Bovine).